The sequence spans 349 residues: Peroxidase 22 (349 aa).

A signal peptide spans 1–29 (MGFSPSFSCSAIGALILGCLLLQASNSNA). A Pyrrolidone carboxylic acid modification is found at glutamine 30. 4 disulfides stabilise this stretch: cysteine 40–cysteine 120, cysteine 73–cysteine 78, cysteine 126–cysteine 329, and cysteine 206–cysteine 238. The active-site Proton acceptor is the histidine 71. Aspartate 72, valine 75, glycine 77, aspartate 79, and serine 81 together coordinate Ca(2+). An N-linked (GlcNAc...) asparagine glycan is attached at asparagine 86. A substrate-binding site is contributed by proline 168. N-linked (GlcNAc...) asparagine glycans are attached at residues asparagine 173 and asparagine 187. Histidine 199 provides a ligand contact to heme b. Threonine 200 lines the Ca(2+) pocket. N-linked (GlcNAc...) asparagine glycans are attached at residues asparagine 217 and asparagine 243. Residues aspartate 251, threonine 254, and aspartate 259 each contribute to the Ca(2+) site.

It belongs to the peroxidase family. Classical plant (class III) peroxidase subfamily. Heme b is required as a cofactor. It depends on Ca(2+) as a cofactor. In terms of tissue distribution, mainly expressed in roots.

Its subcellular location is the secreted. The protein localises to the vacuole. The enzyme catalyses 2 a phenolic donor + H2O2 = 2 a phenolic radical donor + 2 H2O. In terms of biological role, removal of H(2)O(2), oxidation of toxic reductants, biosynthesis and degradation of lignin, suberization, auxin catabolism, response to environmental stresses such as wounding, pathogen attack and oxidative stress. These functions might be dependent on each isozyme/isoform in each plant tissue. This Arabidopsis thaliana (Mouse-ear cress) protein is Peroxidase 22 (PER22).